A 315-amino-acid chain; its full sequence is Transposase for insertion sequence element IS640 (315 aa).

Positions 5–66 constitute an HTH IS21-type domain; sequence EDFYMIKQMR…PFMDYIDMRL (62 aa). One can recognise an Integrase catalytic domain in the interval 111–285; it reads FETQPGYQLQ…TPEQRSRWSR (175 aa).

Belongs to the transposase IS21/IS408/IS1162 family.

Its function is as follows. Involved in the transposition of the insertion sequence. The protein is Transposase for insertion sequence element IS640 (istA) of Shigella sonnei.